The primary structure comprises 593 residues: Aspartate--tRNA ligase (593 aa).

Glu-173 is a binding site for L-aspartate. The aspartate stretch occupies residues 197–200; it reads QLFK. Arg-219 provides a ligand contact to L-aspartate. ATP is bound by residues 219–221 and Gln-228; that span reads RDE. Residue His-448 participates in L-aspartate binding. An ATP-binding site is contributed by Glu-482. Residue Arg-489 participates in L-aspartate binding. 534–537 lines the ATP pocket; it reads GLDR.

The protein belongs to the class-II aminoacyl-tRNA synthetase family. Type 1 subfamily. As to quaternary structure, homodimer.

It is found in the cytoplasm. The catalysed reaction is tRNA(Asp) + L-aspartate + ATP = L-aspartyl-tRNA(Asp) + AMP + diphosphate. Functionally, catalyzes the attachment of L-aspartate to tRNA(Asp) in a two-step reaction: L-aspartate is first activated by ATP to form Asp-AMP and then transferred to the acceptor end of tRNA(Asp). The sequence is that of Aspartate--tRNA ligase from Shewanella denitrificans (strain OS217 / ATCC BAA-1090 / DSM 15013).